A 66-amino-acid chain; its full sequence is Phylloseptin-H7 (66 aa).

The signal sequence occupies residues 1-22 (MAFLKKSLFLVLFLGLVSLSIC). The propeptide occupies 23-44 (EEEKRETEEEENDQEEDDKSEE). The disordered stretch occupies residues 25 to 44 (EKRETEEEENDQEEDDKSEE). Acidic residues predominate over residues 30 to 41 (EEEENDQEEDDK). At Leu-65 the chain carries Leucine amide.

As to expression, expressed by the skin glands.

It localises to the secreted. Its function is as follows. Has antimicrobial activity. The polypeptide is Phylloseptin-H7 (Pithecopus hypochondrialis (Orange-legged leaf frog)).